The following is a 504-amino-acid chain: D-alanine--D-alanyl carrier protein ligase (504 aa).

An ATP-binding site is contributed by 152–153; the sequence is TS. Residue Asp-197 coordinates D-alanine. Position 292–297 (292–297) interacts with ATP; that stretch reads NTYGPT. D-alanine is bound at residue Val-301. ATP contacts are provided by residues Asp-383, 394–397, and Lys-492; that span reads YNGR. Lys-492 contacts D-alanine.

This sequence belongs to the ATP-dependent AMP-binding enzyme family. DltA subfamily.

Its subcellular location is the cytoplasm. The catalysed reaction is holo-[D-alanyl-carrier protein] + D-alanine + ATP = D-alanyl-[D-alanyl-carrier protein] + AMP + diphosphate. It functions in the pathway cell wall biogenesis; lipoteichoic acid biosynthesis. In terms of biological role, catalyzes the first step in the D-alanylation of lipoteichoic acid (LTA), the activation of D-alanine and its transfer onto the D-alanyl carrier protein (Dcp) DltC. In an ATP-dependent two-step reaction, forms a high energy D-alanyl-AMP intermediate, followed by transfer of the D-alanyl residue as a thiol ester to the phosphopantheinyl prosthetic group of the Dcp. D-alanylation of LTA plays an important role in modulating the properties of the cell wall in Gram-positive bacteria, influencing the net charge of the cell wall. In Bacillus cereus (strain AH187), this protein is D-alanine--D-alanyl carrier protein ligase.